The primary structure comprises 1064 residues: Carbamoyl phosphate synthase large chain (1064 aa).

The segment at 1 to 401 (MPKRNDIKKI…SLLKAVRSLE (401 aa)) is carboxyphosphate synthetic domain. Arginine 129, arginine 169, glycine 175, glycine 176, glutamate 208, isoleucine 210, glutamate 215, glycine 241, valine 242, histidine 243, glutamine 284, and glutamate 298 together coordinate ATP. Positions 133 to 327 (KELCERIGEP…IAKMSAKIAI (195 aa)) constitute an ATP-grasp 1 domain. Residues glutamine 284, glutamate 298, and asparagine 300 each coordinate Mg(2+). The Mn(2+) site is built by glutamine 284, glutamate 298, and asparagine 300. The interval 402-546 (IGVFHNDLQE…YSTYEWENES (145 aa)) is oligomerization domain. The segment at 547–929 (KRSSKEKIIV…ALYKSFEAAK (383 aa)) is carbamoyl phosphate synthetic domain. In terms of domain architecture, ATP-grasp 2 spans 671–861 (EKALQDLEIP…MAQLATQMIL (191 aa)). Arginine 707, serine 746, leucine 748, glutamate 752, glycine 777, valine 778, histidine 779, serine 780, glutamine 820, and glutamate 832 together coordinate ATP. Mg(2+) is bound by residues glutamine 820, glutamate 832, and asparagine 834. Positions 820, 832, and 834 each coordinate Mn(2+). One can recognise an MGS-like domain in the interval 930–1064 (LHMADYGSVL…QSRSFTTKNI (135 aa)). The segment at 930–1064 (LHMADYGSVL…QSRSFTTKNI (135 aa)) is allosteric domain.

The protein belongs to the CarB family. In terms of assembly, composed of two chains; the small (or glutamine) chain promotes the hydrolysis of glutamine to ammonia, which is used by the large (or ammonia) chain to synthesize carbamoyl phosphate. Tetramer of heterodimers (alpha,beta)4. Mg(2+) is required as a cofactor. It depends on Mn(2+) as a cofactor.

It carries out the reaction hydrogencarbonate + L-glutamine + 2 ATP + H2O = carbamoyl phosphate + L-glutamate + 2 ADP + phosphate + 2 H(+). The catalysed reaction is hydrogencarbonate + NH4(+) + 2 ATP = carbamoyl phosphate + 2 ADP + phosphate + 2 H(+). It participates in amino-acid biosynthesis; L-arginine biosynthesis; carbamoyl phosphate from bicarbonate: step 1/1. Its pathway is pyrimidine metabolism; UMP biosynthesis via de novo pathway; (S)-dihydroorotate from bicarbonate: step 1/3. Functionally, large subunit of the glutamine-dependent carbamoyl phosphate synthetase (CPSase). CPSase catalyzes the formation of carbamoyl phosphate from the ammonia moiety of glutamine, carbonate, and phosphate donated by ATP, constituting the first step of 2 biosynthetic pathways, one leading to arginine and/or urea and the other to pyrimidine nucleotides. The large subunit (synthetase) binds the substrates ammonia (free or transferred from glutamine from the small subunit), hydrogencarbonate and ATP and carries out an ATP-coupled ligase reaction, activating hydrogencarbonate by forming carboxy phosphate which reacts with ammonia to form carbamoyl phosphate. The polypeptide is Carbamoyl phosphate synthase large chain (Lactococcus lactis subsp. lactis (strain IL1403) (Streptococcus lactis)).